Reading from the N-terminus, the 387-residue chain is Probable aminomethyltransferase, mitochondrial (387 aa).

3 residues coordinate substrate: glutamate 219, arginine 248, and tyrosine 385.

It belongs to the GcvT family. The glycine cleavage system is composed of four proteins: P, T, L and H.

The protein localises to the mitochondrion. The enzyme catalyses N(6)-[(R)-S(8)-aminomethyldihydrolipoyl]-L-lysyl-[protein] + (6S)-5,6,7,8-tetrahydrofolate = N(6)-[(R)-dihydrolipoyl]-L-lysyl-[protein] + (6R)-5,10-methylene-5,6,7,8-tetrahydrofolate + NH4(+). Functionally, the glycine cleavage system catalyzes the degradation of glycine. The protein is Probable aminomethyltransferase, mitochondrial (gcv1) of Schizosaccharomyces pombe (strain 972 / ATCC 24843) (Fission yeast).